Reading from the N-terminus, the 81-residue chain is Probable small nuclear ribonucleoprotein G (81 aa).

A Sm domain is found at 5–76; it reads GQPPALKKYM…VVTVEALEPV (72 aa).

This sequence belongs to the snRNP Sm proteins family.

It localises to the nucleus. Probable common Sm protein, is found in U1 and U2 snRNPs and may be part of the spliceosome. The protein is Probable small nuclear ribonucleoprotein G (C29) of Medicago sativa (Alfalfa).